We begin with the raw amino-acid sequence, 82 residues long: Cyclin-dependent kinases regulatory subunit (82 aa).

Belongs to the CKS family. As to quaternary structure, forms a homohexamer that can probably bind six kinase subunits.

Its function is as follows. Binds to the catalytic subunit of the cyclin dependent kinases and is essential for their biological function. The sequence is that of Cyclin-dependent kinases regulatory subunit (cks1) from Dictyostelium discoideum (Social amoeba).